A 128-amino-acid chain; its full sequence is Flagellar basal body rod protein FlgB (128 aa).

The protein belongs to the flagella basal body rod proteins family. The basal body constitutes a major portion of the flagellar organelle and consists of a number of rings mounted on a central rod. In Gram-negative bacteria, at least four rings, L, P, S and M are present, whereas Gram-positive bacteria lack the L and P rings. The rod consists of about 26 subunits of FlgG in the distal portion, and FlgB, FlgC and FlgF build up the proximal portion of the rod with about 6 subunits each. Rod assembly occurs by export via the flagellum-specific pathway of its constituent proteins and by their incorporation into the rod structure in the probable order of FlgB, FlgC, FlgF and FlgG. Another protein, FliE, also assembles onto the stable rod structure.

Its subcellular location is the bacterial flagellum basal body. Functionally, structural component of flagellum, the bacterial motility apparatus. Part of the rod structure of flagellar basal body. The sequence is that of Flagellar basal body rod protein FlgB from Cereibacter sphaeroides (Rhodobacter sphaeroides).